Reading from the N-terminus, the 477-residue chain is Stromelysin-1 (477 aa).

A signal peptide spans 1-17 (MKGLPVLLWLCVVVCSS). Positions 18–99 (YPLHDSARDD…PRCGVPDVGG (82 aa)) are cleaved as a propeptide — activation peptide. A Cysteine switch motif is present at residues 90-97 (PRCGVPDV). C92 lines the Zn(2+) pocket. Positions 124 and 158 each coordinate Ca(2+). Positions 168 and 170 each coordinate Zn(2+). 4 residues coordinate Ca(2+): D175, G176, G178, and V180. Position 183 (H183) interacts with Zn(2+). G190, N192, and D194 together coordinate Ca(2+). Position 196 (H196) interacts with Zn(2+). Positions 198, 199, and 201 each coordinate Ca(2+). H218 contacts Zn(2+). The active site involves E219. Residues H222 and H228 each coordinate Zn(2+). Hemopexin repeat units lie at residues 287-336 (SPMC…WPSL), 337-383 (PSNM…GLPA), 385-433 (VKKI…FPGV), and 434-477 (DSRV…WFNC). C290 and C477 are disulfide-bonded. D297 provides a ligand contact to Ca(2+). Positions 389 and 438 each coordinate Ca(2+).

The protein belongs to the peptidase M10A family. The cofactor is Ca(2+). Requires Zn(2+) as cofactor.

Its subcellular location is the secreted. The protein resides in the extracellular space. The protein localises to the extracellular matrix. The enzyme catalyses Preferential cleavage where P1', P2' and P3' are hydrophobic residues.. Functionally, metalloproteinase with a rather broad substrate specificity that can degrade fibronectin, laminin, gelatins of type I, III, IV, and V; collagens III, IV, X, and IX, and cartilage proteoglycans. Activates different molecules including growth factors, plasminogen or other matrix metalloproteinases such as MMP9. Once released into the extracellular matrix (ECM), the inactive pro-enzyme is activated by the plasmin cascade signaling pathway. Also acts intracellularly. For example, in dopaminergic neurons, gets activated by the serine protease HTRA2 upon stress and plays a pivotal role in DA neuronal degeneration by mediating microglial activation and alpha-synuclein/SNCA cleavage. In addition, plays a role in immune response and possesses antiviral activity against various viruses. Mechanistically, translocates from the cytoplasm into the cell nucleus upon virus infection to influence NF-kappa-B activities. The protein is Stromelysin-1 (Mmp3) of Mus musculus (Mouse).